The chain runs to 153 residues: Ribonuclease VapC6 (153 aa).

The region spanning 6 to 152 is the PINc domain; sequence VFIDSSVMVG…EKVDFIEIIK (147 aa). Positions 9 and 120 each coordinate Mg(2+).

This sequence belongs to the PINc/VapC protein family. Mg(2+) is required as a cofactor.

Functionally, toxic component of a type II toxin-antitoxin (TA) system. An RNase. This Methanocaldococcus jannaschii (strain ATCC 43067 / DSM 2661 / JAL-1 / JCM 10045 / NBRC 100440) (Methanococcus jannaschii) protein is Ribonuclease VapC6.